Here is an 821-residue protein sequence, read N- to C-terminus: Ribonuclease R (821 aa).

The 327-residue stretch at 267–593 folds into the RNB domain; that stretch reads RVDLRALPLV…LLHRAIKYLI (327 aa). Positions 652–733 constitute an S1 motif domain; that stretch reads GEELEGVVAN…DDRQIDFELV (82 aa). Residues 739-821 form a disordered region; that stretch reads LRGQGKTAKK…KSGKVRDKTK (83 aa). Basic and acidic residues-rich tracts occupy residues 748-764 and 774-794; these read KRADEARAKAQGKKEAA and TKSELKPQVEATRRPDSEGRS. Residues 795 to 814 show a composition bias toward basic residues; that stretch reads KPKKTKAPKKRKDQARKKSG.

The protein belongs to the RNR ribonuclease family. RNase R subfamily.

It localises to the cytoplasm. It catalyses the reaction Exonucleolytic cleavage in the 3'- to 5'-direction to yield nucleoside 5'-phosphates.. In terms of biological role, 3'-5' exoribonuclease that releases 5'-nucleoside monophosphates and is involved in maturation of structured RNAs. The chain is Ribonuclease R from Vibrio cholerae serotype O1 (strain ATCC 39315 / El Tor Inaba N16961).